The sequence spans 297 residues: Guanylate kinase (297 aa).

One can recognise a Guanylate kinase-like domain in the interval 4–183; it reads GKMIIISGPS…AVAKITDVLH (180 aa). Position 11–18 (11–18) interacts with ATP; sequence GPSGVGKG. Positions 204–297 are unknown; it reads EQIVKEKYMY…EQKHYNNDEF (94 aa).

It belongs to the guanylate kinase family.

The protein resides in the cytoplasm. The catalysed reaction is GMP + ATP = GDP + ADP. In terms of biological role, essential for recycling GMP and indirectly, cGMP. The protein is Guanylate kinase (gmk) of Mycoplasma mycoides subsp. mycoides SC (strain CCUG 32753 / NCTC 10114 / PG1).